A 146-amino-acid chain; its full sequence is Meiotically up-regulated gene 96 protein (146 aa).

A helical membrane pass occupies residues 85–104; the sequence is LIRYSLILTCLVAILLSVLW.

It localises to the cytoplasm. The protein localises to the membrane. Has a role in meiosis. This chain is Meiotically up-regulated gene 96 protein (mug96), found in Schizosaccharomyces pombe (strain 972 / ATCC 24843) (Fission yeast).